The chain runs to 235 residues: Octanoyltransferase (235 aa).

Residues 37-220 (AGGPDTLLLL…AVNDALDGWL (184 aa)) form the BPL/LPL catalytic domain. Residues 78 to 85 (RGGKITWH), 150 to 152 (AIG), and 163 to 165 (GFA) each bind substrate. The Acyl-thioester intermediate role is filled by cysteine 181.

Belongs to the LipB family.

The protein resides in the cytoplasm. The enzyme catalyses octanoyl-[ACP] + L-lysyl-[protein] = N(6)-octanoyl-L-lysyl-[protein] + holo-[ACP] + H(+). It participates in protein modification; protein lipoylation via endogenous pathway; protein N(6)-(lipoyl)lysine from octanoyl-[acyl-carrier-protein]: step 1/2. Functionally, catalyzes the transfer of endogenously produced octanoic acid from octanoyl-acyl-carrier-protein onto the lipoyl domains of lipoate-dependent enzymes. Lipoyl-ACP can also act as a substrate although octanoyl-ACP is likely to be the physiological substrate. The chain is Octanoyltransferase from Mycobacterium leprae (strain Br4923).